The sequence spans 243 residues: Alanyl-tRNA editing protein AlaX-M (243 aa).

4 residues coordinate Zn(2+): H105, H109, C208, and H212.

The protein belongs to the class-II aminoacyl-tRNA synthetase family. Editing domain AlaX-M subfamily. Requires Zn(2+) as cofactor.

The protein resides in the cytoplasm. In terms of biological role, functions in trans to edit the amino acid moiety from incorrectly charged Ser-tRNA(Ala) or Gly-tRNA(Ala). Has no activity on incorrectly charged Ser-tRNA(Thr), nor on correctly charged Ala-tRNA(Ala) or Ser-tRNA(Ser). This Methanosarcina barkeri (strain Fusaro / DSM 804) protein is Alanyl-tRNA editing protein AlaX-M (alaXM).